Here is a 203-residue protein sequence, read N- to C-terminus: Endo-type membrane-bound lytic murein transglycosylase A (203 aa).

An N-terminal signal peptide occupies residues 1–15 (MKLRWLLILVVFLAG). A lipid anchor (N-palmitoyl cysteine) is attached at Cys-16. Cys-16 carries S-diacylglycerol cysteine lipidation.

The protein belongs to the transglycosylase Slt family.

It is found in the cell outer membrane. The catalysed reaction is Endolytic cleavage of the (1-&gt;4)-beta-glycosidic linkage between N-acetylmuramic acid (MurNAc) and N-acetylglucosamine (GlcNAc) residues in peptidoglycan with concomitant formation of a 1,6-anhydrobond in the MurNAc residue.. In terms of biological role, murein-degrading enzyme. May play a role in recycling of muropeptides during cell elongation and/or cell division. Preferentially cleaves at a distance of more than two disaccharide units from the ends of the glycan chain. In Klebsiella pneumoniae (strain 342), this protein is Endo-type membrane-bound lytic murein transglycosylase A.